The sequence spans 492 residues: Catalase isozyme 3 (492 aa).

Active-site residues include histidine 65 and asparagine 138. Tyrosine 348 contributes to the heme binding site.

It belongs to the catalase family. As to quaternary structure, homotetramer. Heme serves as cofactor.

The protein localises to the peroxisome. The enzyme catalyses 2 H2O2 = O2 + 2 H2O. In terms of biological role, occurs in almost all aerobically respiring organisms and serves to protect cells from the toxic effects of hydrogen peroxide. This is Catalase isozyme 3 (CAT3) from Nicotiana plumbaginifolia (Leadwort-leaved tobacco).